The chain runs to 391 residues: Heme A synthase (391 aa).

The next 8 helical transmembrane spans lie at 37–57 (IRLWLMALFLLVMAMIVVGGL), 121–141 (RQLGRVIGLVWAVGFLGFLAA), 152–172 (LLALGALGGLQGGIGWWMVAS), 186–206 (LATHLGLAFIILGLIAWQALL), 229–249 (TTVLIGVAFLQIVLGALVAGI), 298–318 (FLHRMAGYALAALGLIFWIFG), 332–352 (LLAMALLAQILLGVGTVLSAA), and 354–374 (WQVAIAHQVGAVVIWVLILHA). Residue His-300 coordinates heme. His-360 provides a ligand contact to heme.

The protein belongs to the COX15/CtaA family. Type 2 subfamily. In terms of assembly, interacts with CtaB. It depends on heme b as a cofactor.

The protein resides in the cell membrane. It catalyses the reaction Fe(II)-heme o + 2 A + H2O = Fe(II)-heme a + 2 AH2. The protein operates within porphyrin-containing compound metabolism; heme A biosynthesis; heme A from heme O: step 1/1. In terms of biological role, catalyzes the conversion of heme O to heme A by two successive hydroxylations of the methyl group at C8. The first hydroxylation forms heme I, the second hydroxylation results in an unstable dihydroxymethyl group, which spontaneously dehydrates, resulting in the formyl group of heme A. This Cereibacter sphaeroides (strain KD131 / KCTC 12085) (Rhodobacter sphaeroides) protein is Heme A synthase.